Here is a 258-residue protein sequence, read N- to C-terminus: D-beta-hydroxybutyrate dehydrogenase (258 aa).

Residue 8 to 32 (LVTGSTSGIGLGIAKALAAQGANII) coordinates NAD(+). Residue S140 participates in substrate binding. Residue Y153 is the Proton acceptor of the active site.

Belongs to the short-chain dehydrogenases/reductases (SDR) family.

The enzyme catalyses (R)-3-hydroxybutanoate + NAD(+) = acetoacetate + NADH + H(+). This Cupriavidus necator (strain ATCC 17699 / DSM 428 / KCTC 22496 / NCIMB 10442 / H16 / Stanier 337) (Ralstonia eutropha) protein is D-beta-hydroxybutyrate dehydrogenase (hbdH1).